A 544-amino-acid chain; its full sequence is Chaperonin GroEL (544 aa).

Residues 30–33 (TLGP), Lys51, 87–91 (DGTTT), Gly415, and Asp495 contribute to the ATP site.

The protein belongs to the chaperonin (HSP60) family. In terms of assembly, forms a cylinder of 14 subunits composed of two heptameric rings stacked back-to-back. Interacts with the co-chaperonin GroES.

Its subcellular location is the cytoplasm. It catalyses the reaction ATP + H2O + a folded polypeptide = ADP + phosphate + an unfolded polypeptide.. Functionally, together with its co-chaperonin GroES, plays an essential role in assisting protein folding. The GroEL-GroES system forms a nano-cage that allows encapsulation of the non-native substrate proteins and provides a physical environment optimized to promote and accelerate protein folding. This is Chaperonin GroEL from Bartonella bacilliformis (strain ATCC 35685 / KC583 / Herrer 020/F12,63).